Reading from the N-terminus, the 245-residue chain is Outer dense fiber protein 1 (245 aa).

2 positions are modified to phosphoserine: serine 5 and serine 10. Repeat unit 1 spans residues arginine 34–aspartate 38. The tract at residues arginine 34–aspartate 78 is 2 X 5 AA repeats of [RC]-C-L-C-D. Phosphoserine is present on serine 64. Copy 2 of the repeat occupies cysteine 74–aspartate 78. A phosphoserine mark is found at serine 87, serine 108, serine 109, serine 137, serine 153, serine 175, and serine 180. The segment at cysteine 195–proline 233 is C-X-P repeat region.

As to quaternary structure, interacts (via leucine zipper motif) with TCP11. Interacts with SPAG4. Interacts with KLC3. Interacts with CCDC42. As to expression, testis. Specifically located to the round spermatid layer and to the luminally-oriented cytoplasm of elongated spermatids.

It is found in the cell projection. The protein resides in the cilium. The protein localises to the flagellum. Its subcellular location is the cytoplasm. It localises to the cytoskeleton. It is found in the microtubule organizing center. The protein resides in the centrosome. Functionally, component of the outer dense fibers (ODF) of spermatozoa. ODF are filamentous structures located on the outside of the axoneme in the midpiece and principal piece of the mammalian sperm tail and may help to maintain the passive elastic structures and elastic recoil of the sperm tail. The chain is Outer dense fiber protein 1 (Odf1) from Rattus norvegicus (Rat).